The sequence spans 613 residues: Dihydroxy-acid dehydratase (613 aa).

Asp-81 is a binding site for Mg(2+). Cys-122 is a [2Fe-2S] cluster binding site. Asp-123 and Lys-124 together coordinate Mg(2+). Position 124 is an N6-carboxylysine (Lys-124). Residue Cys-193 coordinates [2Fe-2S] cluster. Mg(2+) is bound at residue Glu-489. The Proton acceptor role is filled by Ser-515.

It belongs to the IlvD/Edd family. As to quaternary structure, homodimer. Requires [2Fe-2S] cluster as cofactor. It depends on Mg(2+) as a cofactor.

The catalysed reaction is (2R)-2,3-dihydroxy-3-methylbutanoate = 3-methyl-2-oxobutanoate + H2O. It carries out the reaction (2R,3R)-2,3-dihydroxy-3-methylpentanoate = (S)-3-methyl-2-oxopentanoate + H2O. It functions in the pathway amino-acid biosynthesis; L-isoleucine biosynthesis; L-isoleucine from 2-oxobutanoate: step 3/4. The protein operates within amino-acid biosynthesis; L-valine biosynthesis; L-valine from pyruvate: step 3/4. In terms of biological role, functions in the biosynthesis of branched-chain amino acids. Catalyzes the dehydration of (2R,3R)-2,3-dihydroxy-3-methylpentanoate (2,3-dihydroxy-3-methylvalerate) into 2-oxo-3-methylpentanoate (2-oxo-3-methylvalerate) and of (2R)-2,3-dihydroxy-3-methylbutanoate (2,3-dihydroxyisovalerate) into 2-oxo-3-methylbutanoate (2-oxoisovalerate), the penultimate precursor to L-isoleucine and L-valine, respectively. This is Dihydroxy-acid dehydratase from Pseudomonas fluorescens (strain Pf0-1).